We begin with the raw amino-acid sequence, 75 residues long: Protein SlyX homolog (75 aa).

It belongs to the SlyX family.

The sequence is that of Protein SlyX homolog from Vibrio campbellii (strain ATCC BAA-1116).